The chain runs to 138 residues: Large ribosomal subunit protein uL16c (138 aa).

Belongs to the universal ribosomal protein uL16 family. Part of the 50S ribosomal subunit.

It is found in the plastid. It localises to the chloroplast. This Tetradesmus obliquus (Green alga) protein is Large ribosomal subunit protein uL16c.